The sequence spans 113 residues: TAPASLYAPSALVLTIGQGESAAATSPLRAVTLTCAPKATGTHPAADAACAELRRAGGDFDALSAADGVMCTREYAPVVVTVDGVWQGRRLSYERTFANECVKNAGSASVFTF.

Cystine bridges form between Cys35-Cys50 and Cys71-Cys101.

Belongs to the protease inhibitor I16 (SSI) family. Homodimer.

The protein resides in the secreted. Inhibitor of subtilisin BPN' and trypsin. In Streptomyces rochei (Streptomyces parvullus), this protein is Subtilisin inhibitor-like protein 2.